A 181-amino-acid polypeptide reads, in one-letter code: Monofunctional chorismate mutase (181 aa).

Residues 1 to 20 (MIRHIAIFLCSLLMCSTTFA) form the signal peptide. One can recognise a Chorismate mutase domain in the interval 21–102 (DSVTSVSLGA…ASKAIQYRYL (82 aa)). Substrate contacts are provided by arginine 38, lysine 49, aspartate 58, glutamate 62, and glutamine 98.

The protein localises to the periplasm. The enzyme catalyses chorismate = prephenate. The protein operates within metabolic intermediate biosynthesis; prephenate biosynthesis; prephenate from chorismate: step 1/1. Its function is as follows. Catalyzes the Claisen rearrangement of chorismate to prephenate. This is Monofunctional chorismate mutase from Salmonella typhimurium.